Consider the following 546-residue polypeptide: Phosphatidylinositol 4-phosphate 5-kinase type-1 alpha (546 aa).

Residues 66–434 (TSSALKGAIQ…RFQRFMCNTV (369 aa)) enclose the PIPK domain. A Glycyl lysine isopeptide (Lys-Gly) (interchain with G-Cter in ubiquitin) cross-link involves residue Lys88. Disordered regions lie at residues 442–475 (PSPTKKFRSGPSFSRRSGPSGNSCTSQLMASGEH) and 491–518 (LGRPDVLPQTPPLEEISEGSPVPGPSFS). Composition is skewed to low complexity over residues 450–462 (SGPSFSRRSGPSG) and 509–518 (GSPVPGPSFS).

As to quaternary structure, interacts with RAC1. Interacts with TUT1. Forms a complex with CDH1/E-cadherin, CTNNB1/beta-catenin and CTNND1 at the plasma membrane upon calcium stimulation. Found in a ternary complex with IRS1 and DGKZ in the absence of insulin stimulation. Interacts with DGKZ. Interacts with PIP4K2C; the interaction inhibits PIP5K1A kinase activity. In terms of tissue distribution, highest expression in brain. Also detected in skeletal muscle, testis, brain and lung.

The protein resides in the cell membrane. Its subcellular location is the cytoplasm. It localises to the nucleus. The protein localises to the nucleus speckle. It is found in the cell projection. The protein resides in the ruffle. Its subcellular location is the lamellipodium. The enzyme catalyses a 1,2-diacyl-sn-glycero-3-phospho-(1D-myo-inositol 4-phosphate) + ATP = a 1,2-diacyl-sn-glycero-3-phospho-(1D-myo-inositol-4,5-bisphosphate) + ADP + H(+). The catalysed reaction is 1-octadecanoyl-2-(5Z,8Z,11Z,14Z)-eicosatetraenoyl-sn-glycero-3-phospho-1D-myo-inositol 4-phosphate + ATP = 1-octadecanoyl-2-(5Z,8Z,11Z,14Z)-eicosatetraenoyl-sn-glycero-3-phospho-1D-myo-inositol 4,5-bisphosphate + ADP + H(+). It catalyses the reaction 1,2-dihexadecanoyl-sn-glycero-3-phospho-(1D-myo-inositol-4-phosphate) + ATP = 1,2-dihexadecanoyl-sn-glycero-3-phospho-(1D-myo-inositol-4,5-bisphosphate) + ADP + H(+). It carries out the reaction 1-octadecanoyl-2-(9Z)-octadecenoyl-sn-glycero-3-phospho-1D-myo-inositol 4-phosphate + ATP = 1-octadecanoyl-2-(9Z)-octadecenoyl-sn-glycero-3-phospho-1D-myo-inositol 4,5-bisphosphate + ADP + H(+). The enzyme catalyses 1-octadecanoyl-2-(9Z)-octadecenoyl-sn-glycero-3-phospho-1D-myo-inositol + ATP = 1-octadecanoyl-2-(9Z)-octadecenoyl-sn-glycero-3-phospho-1D-myo-inositol 5-phosphate + ADP + H(+). The catalysed reaction is 1-octadecanoyl-2-(9Z,12Z)-octadecadienoyl-sn-glycero-3-phospho-1D-myo-inositol + ATP = 1-octadecanoyl-2-(9Z,12Z)-octadecadienoyl-sn-glycero-3-phospho-1D-myo-inositol 5-phosphate + ADP + H(+). It catalyses the reaction 1-octadecanoyl-2-(5Z,8Z,11Z,14Z-eicosatetraenoyl)-sn-glycero-3-phospho-(1D-myo-inositol) + ATP = 1-octadecanoyl-2-(5Z,8Z,11Z,14Z)-eicosatetraenoyl-sn-glycero-3-phospho-1D-myo-inositol 5-phosphate + ADP + H(+). It carries out the reaction 1,2-di-(9Z,12Z)-octadecadienoyl-sn-glycero-3-phospho-1D-myo-inositol + ATP = 1,2-di(9Z,12Z)-octadecadienoyl-sn-glycero-3-phospho-1D-myo-inositol 5-phosphate + ADP + H(+). Its activity is regulated as follows. Activated by phosphatidic acid. In terms of biological role, catalyzes the phosphorylation of phosphatidylinositol 4-phosphate (PtdIns(4)P/PI4P) to form phosphatidylinositol 4,5-bisphosphate (PtdIns(4,5)P2/PIP2), a lipid second messenger that regulates several cellular processes such as signal transduction, vesicle trafficking, actin cytoskeleton dynamics, cell adhesion, and cell motility. PtdIns(4,5)P2 can directly act as a second messenger or can be utilized as a precursor to generate other second messengers: inositol 1,4,5-trisphosphate (IP3), diacylglycerol (DAG) or phosphatidylinositol-3,4,5-trisphosphate (PtdIns(3,4,5)P3/PIP3). PIP5K1A-mediated phosphorylation of PtdIns(4)P is the predominant pathway for PtdIns(4,5)P2 synthesis. Can also use phosphatidylinositol (PtdIns) as substrate in vitro. Together with PIP5K1C, is required for phagocytosis, both enzymes regulating different types of actin remodeling at sequential steps. Promotes particle ingestion by activating the WAS GTPase-binding protein that induces Arp2/3 dependent actin polymerization at the nascent phagocytic cup. Together with PIP5K1B, is required, after stimulation by G-protein coupled receptors, for the synthesis of IP3 that will induce stable platelet adhesion. Recruited to the plasma membrane by the E-cadherin/beta-catenin complex where it provides the substrate PtdIns(4,5)P2 for the production of PtdIns(3,4,5)P3, IP3 and DAG, that will mobilize internal calcium and drive keratinocyte differentiation. Positively regulates insulin-induced translocation of SLC2A4 to the cell membrane in adipocytes. Together with PIP5K1C has a role during embryogenesis. Independently of its catalytic activity, is required for membrane ruffling formation, actin organization and focal adhesion formation during directional cell migration by controlling integrin-induced translocation of the small GTPase RAC1 to the plasma membrane. Also functions in the nucleus where it acts as an activator of TUT1 adenylyltransferase activity in nuclear speckles, thereby regulating mRNA polyadenylation of a select set of mRNAs. This is Phosphatidylinositol 4-phosphate 5-kinase type-1 alpha from Mus musculus (Mouse).